A 356-amino-acid chain; its full sequence is Glutamine synthetase cytosolic isozyme 1-4 (356 aa).

Ser-2 bears the N-acetylserine mark. Ser-2 and Ser-48 each carry phosphoserine. Residues 19-99 (IIAEYIWIGG…VMCDAYTPAG (81 aa)) form the GS beta-grasp domain. Residues 37-66 (ARTLPGPVTDPSQLPKWNYDGSSTGQAPGD) are disordered. One can recognise a GS catalytic domain in the interval 106–356 (KRHAAAKIFE…IAESTILWKP (251 aa)).

This sequence belongs to the glutamine synthetase family. As to quaternary structure, homooctamer. Interacts with GRF3. As to expression, expressed in the pericycle in the region of lateral root emergence.

It localises to the cytoplasm. It catalyses the reaction L-glutamate + NH4(+) + ATP = L-glutamine + ADP + phosphate + H(+). In terms of biological role, high-affinity glutamine synthetase. May contribute to the homeostatic control of glutamine synthesis in roots. This Arabidopsis thaliana (Mouse-ear cress) protein is Glutamine synthetase cytosolic isozyme 1-4.